The primary structure comprises 499 residues: Hexokinase-2, chloroplastic (499 aa).

A chloroplast-targeting transit peptide spans 1-30; sequence MSVTVSSPAGRSFHISRSPYKKISKPRVII. The Hexokinase domain maps to 39 to 490; sequence LAVAPILTKL…SGIGAALLAA (452 aa). A hexokinase small subdomain region spans residues 94 to 232; sequence TGNEKGLFYA…GLGMQVSALV (139 aa). ADP-binding residues include Gly-108, Thr-109, and Asn-110. Thr-198, Lys-199, Asn-233, and Asp-234 together coordinate D-glucose. A hexokinase large subdomain region spans residues 233 to 479; sequence NDTVATLAGA…KNVVIEHSKD (247 aa). ADP is bound at residue Thr-257. Asn-260, Glu-288, and Glu-318 together coordinate D-glucose. Residue Gly-444 coordinates ADP.

This sequence belongs to the hexokinase family. Expressed in vascular starch sheath, xylem parenchyma, guard cells and root tips.

The protein resides in the plastid. The protein localises to the chloroplast stroma. The catalysed reaction is a D-hexose + ATP = a D-hexose 6-phosphate + ADP + H(+). The enzyme catalyses D-fructose + ATP = D-fructose 6-phosphate + ADP + H(+). It carries out the reaction D-glucose + ATP = D-glucose 6-phosphate + ADP + H(+). Its pathway is carbohydrate metabolism; hexose metabolism. The protein operates within carbohydrate degradation; glycolysis; D-glyceraldehyde 3-phosphate and glycerone phosphate from D-glucose: step 1/4. Functionally, fructose and glucose phosphorylating enzyme. The protein is Hexokinase-2, chloroplastic (HXK2) of Nicotiana tabacum (Common tobacco).